Here is a 505-residue protein sequence, read N- to C-terminus: Xylose import ATP-binding protein XylG (505 aa).

2 consecutive ABC transporter domains span residues 6 to 243 (LEMR…VGRE) and 262 to 505 (VKNY…TGGK). Position 38 to 45 (38 to 45 (GENGAGKS)) interacts with ATP.

It belongs to the ABC transporter superfamily. Xylose importer (TC 3.A.1.2.4) family. The complex is composed of two ATP-binding proteins (XylG), two transmembrane proteins (XylH) and a solute-binding protein (XylF).

The protein resides in the cell membrane. It catalyses the reaction D-xylose(out) + ATP + H2O = D-xylose(in) + ADP + phosphate + H(+). In terms of biological role, part of the ABC transporter complex XylFGH involved in xylose import. Responsible for energy coupling to the transport system. The sequence is that of Xylose import ATP-binding protein XylG from Thermoanaerobacter pseudethanolicus (strain ATCC 33223 / 39E) (Clostridium thermohydrosulfuricum).